Consider the following 266-residue polypeptide: Ribosomal RNA small subunit methyltransferase J (266 aa).

S-adenosyl-L-methionine is bound by residues 109-110, 125-126, and Asp-185; these read RD and ER.

The protein belongs to the methyltransferase superfamily. RsmJ family.

It is found in the cytoplasm. It carries out the reaction guanosine(1516) in 16S rRNA + S-adenosyl-L-methionine = N(2)-methylguanosine(1516) in 16S rRNA + S-adenosyl-L-homocysteine + H(+). Its function is as follows. Specifically methylates the guanosine in position 1516 of 16S rRNA. In Cellvibrio japonicus (strain Ueda107) (Pseudomonas fluorescens subsp. cellulosa), this protein is Ribosomal RNA small subunit methyltransferase J.